We begin with the raw amino-acid sequence, 304 residues long: Protease HtpX homolog (304 aa).

2 helical membrane-spanning segments follow: residues 14–34 and 39–59; these read VFIILGFFIFVLMVGAAIGII and YLNGLILAAAIGAVYILIMVM. Histidine 144 serves as a coordination point for Zn(2+). The active site involves glutamate 145. Residue histidine 148 coordinates Zn(2+). 2 consecutive transmembrane segments (helical) span residues 159-179 and 202-222; these read IAIALVAVIAILSDLAMRLIF and IIIYVVALIFVILAPIIATAI. A Zn(2+)-binding site is contributed by glutamate 231. The disordered stretch occupies residues 275-304; it reads SSPLKSKKDKPGLFDSHPPISSRIERLENM.

The protein belongs to the peptidase M48B family. Requires Zn(2+) as cofactor.

It localises to the cell membrane. In Listeria innocua serovar 6a (strain ATCC BAA-680 / CLIP 11262), this protein is Protease HtpX homolog.